Reading from the N-terminus, the 218-residue chain is Probable septum site-determining protein MinC (218 aa).

The protein belongs to the MinC family. In terms of assembly, interacts with MinD and FtsZ.

Cell division inhibitor that blocks the formation of polar Z ring septums. Rapidly oscillates between the poles of the cell to destabilize FtsZ filaments that have formed before they mature into polar Z rings. Prevents FtsZ polymerization. The protein is Probable septum site-determining protein MinC of Moorella thermoacetica (strain ATCC 39073 / JCM 9320).